Reading from the N-terminus, the 406-residue chain is Glycosylated lysosomal membrane protein (406 aa).

The first 35 residues, 1–35 (MRGSVECTWGWGHCAPSPLLLWTLLLFAAPFGLLG), serve as a signal peptide directing secretion. The Lumenal segment spans residues 36-372 (EKTRQVSLEV…VDGLSPLVLG (337 aa)). N-linked (GlcNAc...) asparagine glycans are attached at residues Asn-65, Asn-134, Asn-159, Asn-187, and Asn-230. The chain crosses the membrane as a helical span at residues 373 to 393 (IMAVALGAPGLMLLGGGLVLL). At 394 to 406 (LHHKKYSEYQSIN) the chain is on the cytoplasmic side. The Lysosomal targeting motif motif lies at 402 to 406 (YQSIN).

The protein belongs to the GLMP family. Interacts (via lumenal domain) with lysosomal protein MFSD1; the interaction starts while both proteins are still in the endoplasmic reticulum and is required for stabilization of MFSD1 in lysosomes but has no direct effect on its targeting to lysosomes or transporter activity. Highly N-glycosylated. N-glycosylation is essential for GLMP stability and for MFSD1 lysosomal localization.

Its subcellular location is the lysosome membrane. In terms of biological role, required to protect lysosomal transporter MFSD1 from lysosomal proteolysis and for MFSD1 lysosomal localization. The polypeptide is Glycosylated lysosomal membrane protein (Homo sapiens (Human)).